Consider the following 458-residue polypeptide: Elongation factor 1-alpha 1 (458 aa).

Glycine 2 carries the n,N,N-trimethylglycine modification. Position 3 is an N6,N6-dimethyllysine; alternate (lysine 3). Lysine 3 is subject to N6-methyllysine; alternate. The tr-type G domain occupies 5–240 (KTHVNVVVIG…DAIEPPTRPT (236 aa)). Positions 14-21 (GHVDSGKS) are G1. 14 to 21 (GHVDSGKS) serves as a coordination point for GTP. An N6-methyllysine modification is found at lysine 30. Residues 70–74 (GITID) form a G2 region. Lysine 79 is modified (N6,N6,N6-trimethyllysine). The tract at residues 91–94 (DAPG) is G3. Residues 91–95 (DAPGH) and 153–156 (NKMD) contribute to the GTP site. A G4 region spans residues 153-156 (NKMD). Residues 192–194 (SGW) form a G5 region. Lysine 316 carries the N6,N6-dimethyllysine; alternate modification. The residue at position 316 (lysine 316) is an N6-methyllysine; alternate. Position 390 is an N6-methyllysine (lysine 390).

The protein belongs to the TRAFAC class translation factor GTPase superfamily. Classic translation factor GTPase family. EF-Tu/EF-1A subfamily.

It localises to the cytoplasm. This protein promotes the GTP-dependent binding of aminoacyl-tRNA to the A-site of ribosomes during protein biosynthesis. In Candida albicans (strain SC5314 / ATCC MYA-2876) (Yeast), this protein is Elongation factor 1-alpha 1 (TEF1).